We begin with the raw amino-acid sequence, 477 residues long: MNLSIQEELQPFVEELQRYITPEFLEELAREMKFVKRKRKFSGSDLATICIWISQRVASDPLVRLCSRLHAVTGTVLSPEGLNKRFNEKSVLFLKHVFSLLLQQKICEQTYISNQLLSHFKRIRIMDATMFQVPHTLEHIYPGSGGCAQTAGIKIQLEYDLHSGQFFNFQVGPGKNNDKTFGTECLDTLRPGDLCIRDLGYFSLEDLDQMDQRGTYYISRLKLNTNVYVKNPSPEYFKNGAIKKQSEYIQINVIQILNQLQPGETIEYQQAYIGDKQQLFSRLVFHRLTAAQLQKRLKKIAEKEKSKHRTYSEKSKLVAGLNVYVTNAPWEWVPMEQVHELYTLRWQIEIVFKTWKSLFDIDHCRTVKQERIECHLYGKLIAIFLCSSTMFKMRQLLLQKKKKELSEYKAIGMIQDHLFLLYQSIQNTQEITKLLTRLFHLLQQNGRKSHRYEKKTVFDIMGVIYEYSGCSKQKKAA.

It belongs to the transposase 11 family.

In terms of biological role, involved in the transposition of the insertion sequence. The chain is Transposase for insertion sequence element IS231F from Bacillus thuringiensis subsp. israelensis.